A 527-amino-acid polypeptide reads, in one-letter code: Putative GTP-binding protein 6 (527 aa).

A Hflx-type G domain is found at 306-470 (PIISILGYTN…QVETAVMKST (165 aa)). GTP-binding positions include 312-319 (GYTNSGKT), 338-342 (FATLD), 360-363 (DTIG), 429-432 (NKID), and 448-450 (SAL). Residues Thr-319 and Thr-340 each coordinate Mg(2+).

Belongs to the TRAFAC class OBG-HflX-like GTPase superfamily. HflX GTPase family. It depends on Mg(2+) as a cofactor.

This is Putative GTP-binding protein 6 (gtpbp6) from Xenopus laevis (African clawed frog).